The following is a 603-amino-acid chain: Beta-glucuronidase (603 aa).

The D-glucuronate site is built by D163 and N412. The Proton donor role is filled by E413. D-glucuronate-binding residues include N466, Y472, E504, W549, and K568. E504 (nucleophile) is an active-site residue. The N-K motif signature appears at 566–568 (NKK).

It belongs to the glycosyl hydrolase 2 family. In terms of assembly, homotetramer.

The enzyme catalyses a beta-D-glucuronoside + H2O = D-glucuronate + an alcohol. It catalyses the reaction 4-methylumbelliferone beta-D-glucuronate + H2O = 4-methylumbelliferone + D-glucuronate. With respect to regulation, potently inhibited by a set of synthetic compounds like thio-urea derivatives and analogs, and uronic isofagomine (UIFG) derivatives. Inhibitors of gut microbial beta-glucuronidases block the reactivation of glucuronidated cancer drugs, and thereby alleviate drug-induced GI toxicity. Its function is as follows. Displays beta-glucuronidase activity with the artificial substrate p-nitrophenyl-beta-D-glucuronide (PNPG) and with 4-methylumbelliferyl-glucuronide. Is likely capable of scavenging glucuronate from a range of chemically distinct xenobiotic and endobiotic glucuronides present in the gastrointestinal (GI) tract, to be able to utilize these diverse sources of carbon. As part of the GI microbiome, this enzyme is able to reactivate glucuronide drug conjugates, such reactivated compounds can significantly damage the GI tract. This chain is Beta-glucuronidase (uidA), found in Escherichia coli (strain K12).